A 441-amino-acid polypeptide reads, in one-letter code: Platelet-activating factor acetylhydrolase (441 aa).

The signal sequence occupies residues 1–21 (MVPPKLHVLFCLCGCLAVVYP). Ser-273 serves as the catalytic Nucleophile. Active-site charge relay system residues include Asp-296 and His-351. N-linked (GlcNAc...) asparagine glycosylation is found at Asn-423 and Asn-433.

Belongs to the AB hydrolase superfamily. Lipase family. In terms of processing, N-glycosylated. Macrophage-derived PLA2G7 carries sialylated complex-type N-glycans that hinder its binding to HDL particles. Plasma. Secreted by macrophages (at protein level).

It is found in the secreted. The protein localises to the extracellular space. It carries out the reaction a 1-O-alkyl-2-acetyl-sn-glycero-3-phosphocholine + H2O = a 1-O-alkyl-sn-glycero-3-phosphocholine + acetate + H(+). The enzyme catalyses 1-O-decyl-2-acetyl-sn-glycero-3-phosphocholine + H2O = 1-O-decyl-sn-glycero-3-phosphocholine + acetate + H(+). The catalysed reaction is 1-O-dodecyl-2-acetyl-sn-glycero-3-phosphocholine + H2O = 1-O-dodecyl-sn-glycero-3-phosphocholine + acetate + H(+). It catalyses the reaction 1-O-tetradecyl-2-acetyl-sn-glycero-3-phosphocholine + H2O = 1-O-tetradecyl-sn-glycero-3-phosphocholine + acetate + H(+). It carries out the reaction 1-O-hexadecyl-2-acetyl-sn-glycero-3-phosphocholine + H2O = 1-O-hexadecyl-sn-glycero-3-phosphocholine + acetate + H(+). The enzyme catalyses 1-O-octadecyl-2-acetyl-sn-glycero-3-phosphocholine + H2O = 1-O-octadecyl-sn-glycero-3-phosphocholine + acetate + H(+). The catalysed reaction is 1-hexadecanoyl-2-acetyl-sn-glycero-3-phosphocholine + H2O = 1-hexadecanoyl-sn-glycero-3-phosphocholine + acetate + H(+). It catalyses the reaction 1-hexadecanoyl-2-propionyl-sn-glycero-3-phosphocholine + H2O = propanoate + 1-hexadecanoyl-sn-glycero-3-phosphocholine + H(+). It carries out the reaction 1-hexadecanoyl-2-butanoyl-sn-glycero-3-phosphocholine + H2O = butanoate + 1-hexadecanoyl-sn-glycero-3-phosphocholine + H(+). The enzyme catalyses 1-hexadecanoyl-2-pentanoyl-sn-glycero-3-phosphocholine + H2O = pentanoate + 1-hexadecanoyl-sn-glycero-3-phosphocholine + H(+). The catalysed reaction is 1-hexadecanoyl-2-glutaroyl-sn-glycero-3-phosphocholine + H2O = glutarate + 1-hexadecanoyl-sn-glycero-3-phosphocholine + H(+). It catalyses the reaction 1-hexadecanoyl-2-(5-oxopentanoyl)-sn-glycero-3-phosphocholine + H2O = 5-oxopentanoate + 1-hexadecanoyl-sn-glycero-3-phosphocholine + H(+). It carries out the reaction 1-hexadecanoyl-2-(9-oxononanoyl)-sn-glycero-3-phosphocholine + H2O = 9-oxononanoate + 1-hexadecanoyl-sn-glycero-3-phosphocholine + H(+). The enzyme catalyses 1-hexadecanoyl-2-[9-hydroperoxy-(10E-octadecenoyl)]-sn-glycero-3-phosphocholine + H2O = 9-hydroperoxy-10E-octadecenoate + 1-hexadecanoyl-sn-glycero-3-phosphocholine + H(+). The catalysed reaction is 1-hexadecanoyl-2-(10-hydroperoxy-8E-octadecenoyl)-sn-glycero-3-phosphocholine + H2O = 10-hydroperoxy-(8E)-octadecenoate + 1-hexadecanoyl-sn-glycero-3-phosphocholine + H(+). Its function is as follows. Lipoprotein-associated calcium-independent phospholipase A2 involved in phospholipid catabolism during inflammatory and oxidative stress response. At the lipid-aqueous interface, hydrolyzes the ester bond of fatty acyl group attached at sn-2 position of phospholipids (phospholipase A2 activity). Specifically targets phospholipids with a short-chain fatty acyl group at sn-2 position. Can hydrolyze phospholipids with long fatty acyl chains, only if they carry oxidized functional groups. Hydrolyzes and inactivates platelet-activating factor (PAF, 1-O-alkyl-2-acetyl-sn-glycero-3-phosphocholine), a potent pro-inflammatory signaling lipid that acts through PTAFR on various innate immune cells. Hydrolyzes oxidatively truncated phospholipids carrying an aldehyde group at omega position, preventing their accumulation in low-density lipoprotein (LDL) particles and uncontrolled pro-inflammatory effects. As part of high-density lipoprotein (HDL) particles, can hydrolyze phospholipids having long-chain fatty acyl hydroperoxides at sn-2 position and protect against potential accumulation of these oxylipins in the vascular wall. Catalyzes the release from membrane phospholipids of F2-isoprostanes, lipid biomarkers of cellular oxidative damage. This Homo sapiens (Human) protein is Platelet-activating factor acetylhydrolase (PLA2G7).